The following is a 283-amino-acid chain: Probable endonuclease 4 (283 aa).

Positions 67, 107, 144, 178, 181, 215, 228, 230, and 260 each coordinate Zn(2+).

This sequence belongs to the AP endonuclease 2 family. The cofactor is Zn(2+).

It catalyses the reaction Endonucleolytic cleavage to 5'-phosphooligonucleotide end-products.. In terms of biological role, endonuclease IV plays a role in DNA repair. It cleaves phosphodiester bonds at apurinic or apyrimidinic (AP) sites, generating a 3'-hydroxyl group and a 5'-terminal sugar phosphate. This is Probable endonuclease 4 from Citrifermentans bemidjiense (strain ATCC BAA-1014 / DSM 16622 / JCM 12645 / Bem) (Geobacter bemidjiensis).